A 370-amino-acid polypeptide reads, in one-letter code: Cyanuric acid amidohydrolase (370 aa).

Residues 1 to 103 are RU A; that stretch reads MQAQVFRVPM…TIFTVQKTDN (103 aa). Substrate is bound by residues R51 and 82–83; that span reads SG. The tract at residues 113-250 is RU B; sequence RLAVQQIFTR…NEIIVMGNSR (138 aa). K163 is a catalytic residue. Substrate-binding positions include R195 and 233 to 234; that span reads SA. Catalysis depends on S233, which acts as the Nucleophile. An RU C region spans residues 256-370; that stretch reads LVIGHAEMKD…GPVAVIARTA (115 aa). Residue E303 participates in Mg(2+) binding. Substrate-binding positions include R330 and 349–350; that span reads SG. Mg(2+) contacts are provided by S352, Q355, G356, P357, and G360.

The protein belongs to the cyclic amide hydrolase (CyAH) family. Homotetramer.

It catalyses the reaction cyanurate + H2O = 1-carboxybiuret + H(+). It participates in xenobiotic degradation; atrazine degradation; biuret from cyanurate: step 1/1. With respect to regulation, inhibited by barbituric acid. Its function is as follows. Responsible for the hydrolysis of cyanuric acid, an intermediate formed during catabolism of s-triazine based compounds in herbicides such as atrazine and polymers such as melamine. Catalyzes the hydrolytic opening of the s-triazine ring of cyanuric acid (2,4,6-trihydroxy-s-triazine) to yield carbon dioxide and carboxybiuret, which spontaneously decarboxylates to biuret. The chain is Cyanuric acid amidohydrolase (trzD) from Pseudomonas sp.